The following is a 546-amino-acid chain: CTP synthase (546 aa).

Positions 1–267 are amidoligase domain; the sequence is MTKFIFVTGG…AEQVLDILQL (267 aa). A CTP-binding site is contributed by Ser13. Ser13 contributes to the UTP binding site. Residue 14-19 participates in ATP binding; the sequence is SIGKGI. L-glutamine is bound at residue Tyr54. Residue Asp71 coordinates ATP. Mg(2+)-binding residues include Asp71 and Glu141. CTP contacts are provided by residues 148–150, 188–193, and Lys224; these read DIE and KTKPTQ. UTP-binding positions include 188–193 and Lys224; that span reads KTKPTQ. Residues 292–534 enclose the Glutamine amidotransferase type-1 domain; sequence EVAIVGKYVR…IKAALGSDLT (243 aa). Residue Gly354 coordinates L-glutamine. Residue Cys381 is the Nucleophile; for glutamine hydrolysis of the active site. L-glutamine-binding positions include 382 to 385, Glu405, and Arg462; that span reads LGMQ. Active-site residues include His507 and Glu509.

It belongs to the CTP synthase family. Homotetramer.

The catalysed reaction is UTP + L-glutamine + ATP + H2O = CTP + L-glutamate + ADP + phosphate + 2 H(+). The enzyme catalyses L-glutamine + H2O = L-glutamate + NH4(+). It catalyses the reaction UTP + NH4(+) + ATP = CTP + ADP + phosphate + 2 H(+). It participates in pyrimidine metabolism; CTP biosynthesis via de novo pathway; CTP from UDP: step 2/2. Its activity is regulated as follows. Allosterically activated by GTP, when glutamine is the substrate; GTP has no effect on the reaction when ammonia is the substrate. The allosteric effector GTP functions by stabilizing the protein conformation that binds the tetrahedral intermediate(s) formed during glutamine hydrolysis. Inhibited by the product CTP, via allosteric rather than competitive inhibition. Catalyzes the ATP-dependent amination of UTP to CTP with either L-glutamine or ammonia as the source of nitrogen. Regulates intracellular CTP levels through interactions with the four ribonucleotide triphosphates. This Synechococcus sp. (strain ATCC 27144 / PCC 6301 / SAUG 1402/1) (Anacystis nidulans) protein is CTP synthase.